Here is a 2299-residue protein sequence, read N- to C-terminus: Protein Ycf2 (2299 aa).

1642–1649 (GSIGTGRS) provides a ligand contact to ATP.

It belongs to the Ycf2 family.

It localises to the plastid. It is found in the chloroplast stroma. In terms of biological role, probable ATPase of unknown function. Its presence in a non-photosynthetic plant (Epifagus virginiana) and experiments in tobacco indicate that it has an essential function which is probably not related to photosynthesis. In Nandina domestica (Heavenly bamboo), this protein is Protein Ycf2.